We begin with the raw amino-acid sequence, 103 residues long: Large ribosomal subunit protein bL21 (103 aa).

It belongs to the bacterial ribosomal protein bL21 family. As to quaternary structure, part of the 50S ribosomal subunit. Contacts protein L20.

Functionally, this protein binds to 23S rRNA in the presence of protein L20. The chain is Large ribosomal subunit protein bL21 from Aeromonas hydrophila subsp. hydrophila (strain ATCC 7966 / DSM 30187 / BCRC 13018 / CCUG 14551 / JCM 1027 / KCTC 2358 / NCIMB 9240 / NCTC 8049).